The sequence spans 466 residues: Zinc finger protein ZIC 3 (466 aa).

The segment covering 65–80 (DLSSGQSSAFTPQGSG) has biased composition (polar residues). The disordered stretch occupies residues 65-103 (DLSSGQSSAFTPQGSGYANALGHHHHHHHHHHASQVPTY). Positions 86 to 97 (GHHHHHHHHHHA) are enriched in basic residues. Lys-247 is covalently cross-linked (Glycyl lysine isopeptide (Lys-Gly) (interchain with G-Cter in SUMO2)). The C2H2-type 1; atypical zinc-finger motif lies at 250-285 (LSCKWIEEAQLSRPKKSCDRTFSTMHELVTHVTMEH). The C2H2-type 2; atypical zinc-finger motif lies at 294 to 321 (HVCYWEECPREGKSFKAKYKLVNHIRVH). 2 short sequence motifs (nuclear localization signal) span residues 296–321 (CYWEECPREGKSFKAKYKLVNHIRVH) and 329–351 (CPFPGCGKIFARSENLKIHKRTH). 3 C2H2-type zinc fingers span residues 327–351 (FPCPFPGCGKIFARSENLKIHKRTH), 357–381 (FKCEFEGCDRRFANSSDRKKHMHVH), and 387–409 (YICKVCDKSYTHPSSLRKHMKVH). The interval 403–466 (RKHMKVHESQ…LPPNFNEWYV (64 aa)) is disordered. Residues 411–427 (SQGSDSSPAASSGYESS) show a composition bias toward low complexity. A compositionally biased stretch (polar residues) spans 434-454 (SANSKDTTKTPSAVQTSTSHN).

Belongs to the GLI C2H2-type zinc-finger protein family. In terms of assembly, interacts with KPNA1 and KPNA6. Interacts (via C2H2-type domains 3, 4 and 5) with GLI3; the interaction enhances its transcriptional activity. Interacts (via the C2H2-type domains 3, 4 and 5) with MDFIC (via the C2H2-type domains 3, 4 and 5); the interaction reduces its transcriptional activity. In terms of tissue distribution, CNS. A high level expression is seen in the cerebellum.

The protein resides in the nucleus. Its subcellular location is the cytoplasm. In terms of biological role, acts as a transcriptional activator. Required in the earliest stages in both axial midline development and left-right (LR) asymmetry specification. Binds to the minimal GLI-consensus sequence 5'-GGGTGGTC-3'. This chain is Zinc finger protein ZIC 3 (Zic3), found in Mus musculus (Mouse).